The following is a 472-amino-acid chain: Tryptophanase (472 aa).

N6-(pyridoxal phosphate)lysine is present on Lys270.

Belongs to the beta-eliminating lyase family. As to quaternary structure, homotetramer. It depends on pyridoxal 5'-phosphate as a cofactor.

It carries out the reaction L-tryptophan + H2O = indole + pyruvate + NH4(+). It functions in the pathway amino-acid degradation; L-tryptophan degradation via pyruvate pathway; indole and pyruvate from L-tryptophan: step 1/1. The chain is Tryptophanase from Haemophilus influenzae (strain 86-028NP).